Here is a 125-residue protein sequence, read N- to C-terminus: Small ribosomal subunit protein bS16 (125 aa).

The tract at residues 87 to 125 is disordered; the sequence is EGKKKQALARQSASKKAVKEKTEESKGSEVDSETSTSAD. Residues 103-115 are compositionally biased toward basic and acidic residues; the sequence is AVKEKTEESKGSE.

This sequence belongs to the bacterial ribosomal protein bS16 family.

The sequence is that of Small ribosomal subunit protein bS16 from Prochlorococcus marinus (strain MIT 9211).